An 850-amino-acid polypeptide reads, in one-letter code: Receptor-like protein kinase ANXUR1 (850 aa).

The first 26 residues, 1–26 (MSGKTRILFFLTCLSFLLVFPTRSNG), serve as a signal peptide directing secretion. Over 27 to 429 (QDLALSCGTS…KKEFKNEKRH (403 aa)) the chain is Extracellular. N114, N132, N292, N302, and N330 each carry an N-linked (GlcNAc...) asparagine glycan. Residues 430–450 (AFIIGSAGGVLAVLIGALCFT) traverse the membrane as a helical segment. The Cytoplasmic segment spans residues 451 to 850 (AYKKKQGYQG…FSQIVNPKGR (400 aa)). Residues 517–790 (FDDSNVIGVG…GDVLWNLEFA (274 aa)) enclose the Protein kinase domain. Residues 523–531 (IGVGGFGKV) and K545 contribute to the ATP site. The active-site Proton acceptor is D641. The disordered stretch occupies residues 796–850 (TADGTRHRTPNNGGSSEDLGRGGMAVNVAGRDDVSDLSSEDNTEIFSQIVNPKGR). Positions 839 to 850 (EIFSQIVNPKGR) are enriched in polar residues.

This sequence belongs to the protein kinase superfamily. Ser/Thr protein kinase family. Expressed in pollen, but not in pistils or seedlings.

The protein resides in the cell membrane. It carries out the reaction L-seryl-[protein] + ATP = O-phospho-L-seryl-[protein] + ADP + H(+). The enzyme catalyses L-threonyl-[protein] + ATP = O-phospho-L-threonyl-[protein] + ADP + H(+). In terms of biological role, receptor-like protein kinase that controls pollen tube behavior by directing rupture at proper timing to release the sperm cell. In Arabidopsis thaliana (Mouse-ear cress), this protein is Receptor-like protein kinase ANXUR1 (ANX1).